Consider the following 184-residue polypeptide: Prolyl-tRNA synthetase associated domain-containing protein 1 (184 aa).

It belongs to the PRORSD1 family.

This is Prolyl-tRNA synthetase associated domain-containing protein 1 (Prorsd1) from Danio rerio (Zebrafish).